The primary structure comprises 596 residues: Transcription factor IIIB 70 kDa subunit (596 aa).

The TFIIB-type zinc-finger motif lies at 1 to 33 (MPVCKNCHGTEFERDLSNANNDLVCKACGVVSE). Zn(2+) contacts are provided by cysteine 4, cysteine 7, cysteine 25, and cysteine 28. Repeat copies occupy residues 90-166 (VSYA…KMVK) and 185-264 (FAEK…EFKN). 2 disordered regions span residues 363–421 (GENI…NESG) and 509–534 (IATGNTSVKKKRTRRRNNTRSDEPTK). A compositionally biased stretch (basic and acidic residues) spans 365-375 (NIYHEGSENET). Phosphoserine occurs at positions 381 and 384. The segment covering 388–421 (EHVEGEDKETEGTEEKVKKVKTKTSEEKKENESG) has biased composition (basic and acidic residues). Over residues 516–526 (VKKKRTRRRNN) the composition is skewed to basic residues.

This sequence belongs to the TFIIB family. As to quaternary structure, TFIIIB comprises the TATA-binding protein (TBP), the B-related factor (BRF) and the B' component (TFC5).

It localises to the nucleus. Functionally, general activator of RNA polymerase III transcription. Interacts with TBP. Binds to Pol III subunit C34 and to the TAU135 component of TFIIIC. The sequence is that of Transcription factor IIIB 70 kDa subunit (BRF1) from Saccharomyces cerevisiae (strain ATCC 204508 / S288c) (Baker's yeast).